The primary structure comprises 200 residues: 7-methyl-GTP pyrophosphatase (200 aa).

D69 functions as the Proton acceptor in the catalytic mechanism.

It belongs to the Maf family. YceF subfamily. It depends on a divalent metal cation as a cofactor.

It localises to the cytoplasm. The catalysed reaction is N(7)-methyl-GTP + H2O = N(7)-methyl-GMP + diphosphate + H(+). Functionally, nucleoside triphosphate pyrophosphatase that hydrolyzes 7-methyl-GTP (m(7)GTP). May have a dual role in cell division arrest and in preventing the incorporation of modified nucleotides into cellular nucleic acids. This chain is 7-methyl-GTP pyrophosphatase, found in Colwellia psychrerythraea (strain 34H / ATCC BAA-681) (Vibrio psychroerythus).